The chain runs to 2892 residues: E3 ubiquitin-protein ligase lubel (2892 aa).

Disordered regions lie at residues 23–55 (DRIG…KSTP), 125–252 (KQHM…QLEK), 395–423 (SQQH…QFGS), 483–631 (PSAA…ESEG), 644–672 (QKLQ…ENTQ), 685–737 (AHEE…PDHE), 757–865 (CCKT…DNSL), and 949–975 (DRFT…QQES). A compositionally biased stretch (low complexity) spans 40-52 (GLPKAPALPPKAK). Over residues 189–198 (GWRGSLGGGA) the composition is skewed to gly residues. Polar residues predominate over residues 206-215 (ATSSANQMNN). 2 stretches are compositionally biased toward low complexity: residues 402-412 (AQHPHQALPQH) and 483-503 (PSAA…TPSR). Acidic residues predominate over residues 516–528 (VDDELTDDEDSDQ). Polar residues predominate over residues 535 to 546 (VSNRSGMTSASR). A compositionally biased stretch (basic residues) spans 547–560 (SQHHQNHIQPRQRR). Polar residues predominate over residues 606–623 (GTLTRNKTATDSARTSRI). Over residues 647 to 670 (QEADQHKSSKKAEPKRKPEMKDEN) the composition is skewed to basic and acidic residues. The segment covering 801–813 (KPTTKSQQPSQKS) has biased composition (polar residues). Composition is skewed to low complexity over residues 818 to 837 (SKTT…AVNS) and 846 to 856 (KTPSKSTLKTS). In terms of domain architecture, UBA-like 1 spans 1042-1187 (MHIILKELEL…LMRIWGSPNG (146 aa)). Disordered regions lie at residues 1214–1252 (LQPP…SPYQ), 1477–1520 (LPTA…KLET), 1557–1653 (AEVQ…KILS), 1717–2019 (STTI…NLSE), 2032–2082 (RDEI…EGNT), 2191–2316 (SAPP…PLRS), and 2411–2431 (DYET…EPQK). Over residues 1241-1252 (VKSTYATPSPYQ) the composition is skewed to polar residues. Over residues 1510–1519 (EELRQQEKLE) the composition is skewed to basic and acidic residues. The segment covering 1560–1571 (QVQSDDQPSTSR) has biased composition (polar residues). Basic residues predominate over residues 1576–1587 (RAKRSQQSRKGR). The span at 1595–1607 (PTNRTKLPNNIDQ) shows a compositional bias: polar residues. Residues 1608-1627 (KVNESKTAAKETEAVKDKDL) are compositionally biased toward basic and acidic residues. Polar residues-rich tracts occupy residues 1630–1653 (AASN…KILS), 1717–1726 (STTISEQSEG), and 1764–1779 (KSPT…TSHI). Positions 1822-1834 (LSSSSLRSESRSS) are enriched in low complexity. Residues 1859-1881 (TVSSPKSEQLSDNQEVNLVSQET) show a composition bias toward polar residues. Residues 1918–1927 (DSDEVFEDAP) show a composition bias toward acidic residues. Basic and acidic residues predominate over residues 1953-1963 (DGQRAETKSPE). 2 stretches are compositionally biased toward acidic residues: residues 1964 to 1975 (DEVVILLDEESQ) and 2036 to 2079 (SMDE…DGEE). Low complexity-rich tracts occupy residues 2214–2230 (PSEV…ALPI) and 2269–2291 (SGTA…TVSK). Over residues 2297–2308 (NEPTNKSNSTPL) the composition is skewed to polar residues. Positions 2411–2425 (DYETSATEEEQEEPN) are enriched in acidic residues. The region spanning 2457–2513 (DPAILARKYVDQELVTNIAEAQIAATLVSMKFSEDVALWAARECSDLDQAIAMLQQE) is the UBA-like 2 domain. Positions 2510-2748 (LQQECELCMN…LGLHAHHPRN (239 aa)) are TRIAD supradomain. 14 residues coordinate Zn(2+): C2514, C2517, C2537, C2540, C2618, C2621, C2636, C2639, C2644, C2647, H2655, C2660, C2690, and C2693. The segment at 2514 to 2564 (CELCMNSYPMNQMVSMLKCLHKCCKQCAKSYFTVQITDRSINDCSCPFCKL) adopts an RING-type 1 zinc-finger fold. The interval 2514 to 2892 (CELCMNSYPM…IKKHIPLKSA (379 aa)) is necessary for linear polyubiquitination and sufficent for inducing DptA in the intestine. An IBR-type zinc finger spans residues 2601–2660 (QRKLRDRSLLQDPNFKWCIQCSSGFFARPKQKRLICPDCGSVTCAQCRKPWERQHEGSSC). The RING-type 2; atypical zinc finger occupies 2690 to 2720 (CPKCKFRYSLARGGCMHFTCTQCKFEFCYGC). C2704 is a catalytic residue. Zn(2+) is bound by residues C2709 and C2712.

The protein belongs to the RBR family.

The enzyme catalyses [E2 ubiquitin-conjugating enzyme]-S-ubiquitinyl-L-cysteine + [acceptor protein]-L-lysine = [E2 ubiquitin-conjugating enzyme]-L-cysteine + [acceptor protein]-N(6)-ubiquitinyl-L-lysine.. In terms of biological role, E3 ubiquitin-protein ligase which conjugates linear 'Met-1'- and 'Lys-63'-linked polyubiquitin chains to substrates and plays a crucial role in the NF-kappa-B intestinal inflammatory response to oral infection and in the heat stress response. Preferentially interacts with 'Lys-63'-linked, and to a lesser extent 'Lys-48'-linked, polyubiquitin chains. Upon oral infection with a Gram-negative bacterium E.carotovora subsp. carotovora 15, functions with the E2 ubiquitin-conjugating enzyme Ubc10 to mediate the conjugation of 'Lys-63'- and linear 'Met-1'-linked polyubiquitin chains to the substrate key which is essential for activation of the NF-kappa-B signaling cascade in the adult intestinal epithelium. It is not required for systemic immune response to septic infection with either E.carotovora subsp. carotovora 15 or Gram-positive M.luteus bacteria. Function in controlling linear ubiquitination is also essential for regulating the heat stress response in adults. This function may require the E2 ubiquitin-conjugating enzymes Ubc10 or eff. The polypeptide is E3 ubiquitin-protein ligase lubel (Drosophila melanogaster (Fruit fly)).